The chain runs to 447 residues: MNSSETTICALASGVCKGGIGVVRVSGPLCKVIAKKMLGFVPKPRYAHYGLFFDQENDEIDKGIALFFPKPHSFTGEDILEFQGHGGMSVMCCLLESVISMGAKPADPGEFSKRAFLNGKMNLVQAEAVADMINANSKRASKSAFRSLSGEFSNQVNALTKSIVELRVFVEATIDFSDEEIDFLQFEQVKLKAKGIKQAVETILKSATQGVILREGLNVVIAGKPNAGKSSLLNALTQESSAIVTDIAGTTRDVLKETICVNGMPLNIIDTAGLHDSDDKIEKEGIKRAHFEIERADVVLMVFDAQDDKPDFSILPKNIDDQPLLLIKNKVDLISGAVKKEMINNIVQLSISAKHSKGMELLRKELSDIAGLEDFSEGVVLSRKRHIIALEESLASIDNAIMQLENGVVELMAEDLRFAGQFMGSITGEFSSDDLLGEIFSSFCIGK.

Arg24, Glu81, and Lys120 together coordinate (6S)-5-formyl-5,6,7,8-tetrahydrofolate. The 156-residue stretch at 216-371 (GLNVVIAGKP…LRKELSDIAG (156 aa)) folds into the TrmE-type G domain. Asn226 is a binding site for K(+). GTP is bound by residues 226–231 (NAGKSS), 245–251 (TDIAGTT), and 270–273 (DTAG). Ser230 lines the Mg(2+) pocket. Residues Thr245, Ile247, and Thr250 each coordinate K(+). Position 251 (Thr251) interacts with Mg(2+). Lys447 serves as a coordination point for (6S)-5-formyl-5,6,7,8-tetrahydrofolate.

The protein belongs to the TRAFAC class TrmE-Era-EngA-EngB-Septin-like GTPase superfamily. TrmE GTPase family. In terms of assembly, homodimer. Heterotetramer of two MnmE and two MnmG subunits. K(+) is required as a cofactor.

The protein resides in the cytoplasm. Exhibits a very high intrinsic GTPase hydrolysis rate. Involved in the addition of a carboxymethylaminomethyl (cmnm) group at the wobble position (U34) of certain tRNAs, forming tRNA-cmnm(5)s(2)U34. In Ruthia magnifica subsp. Calyptogena magnifica, this protein is tRNA modification GTPase MnmE.